Consider the following 422-residue polypeptide: Exodeoxyribonuclease 7 large subunit (422 aa).

Belongs to the XseA family. In terms of assembly, heterooligomer composed of large and small subunits.

It localises to the cytoplasm. It catalyses the reaction Exonucleolytic cleavage in either 5'- to 3'- or 3'- to 5'-direction to yield nucleoside 5'-phosphates.. Bidirectionally degrades single-stranded DNA into large acid-insoluble oligonucleotides, which are then degraded further into small acid-soluble oligonucleotides. This chain is Exodeoxyribonuclease 7 large subunit, found in Leptospira borgpetersenii serovar Hardjo-bovis (strain JB197).